The chain runs to 564 residues: MLANSASVRILIKGGKVVNDDCTHEADVYIESGIIQQVGRELMIPGGAKVIDATGKLVIPGGIDTSTHFHQTFMNATCVDDFYHGTKAALVGGTTMIIGHVLPDKETSLVEAYEKCRALADPKVCCDYALHVGITWWAPKVKAEMETLVREKGVNSFQMFMTYKDLYMLRDSELYQVFHACRDIGAIPRVHAENGELVAEGAKEALDLGITGPEGIEISHPEELEAEATHRVITIANRTHCPIYLVNVSSISAGDVIAAAKMQGKVVLAETTNAHATLTGLHYYHQDWSHAAAYVTVPPLRLDTNTSTYLMSLLANDTLNIVASDHRPFTTKQKAMGKEDFTKIPHGVSGVQDRMSVVWERGVVGGKMDENRFVAVTSSNAAKILNLYPRKGRIIPGADADVVVWDPEATKTISASTQVQGGDFNLYENMRCHGVPLVTISRGRVVYENGVFMCAEGTGKFCPLRSFPDIVYKKLVQREKTLKVRGVDRTPYLGDVAIVVHPGKKEMGTPLADTPTRPVTRHGGMRDLHESSFSLSGSQIDDHVPKRASARILAPPGGRSSGIW.

Phosphothreonine is present on residues T509 and T514. 2 positions are modified to phosphoserine: S532 and S538. The residue at position 559 (R559) is an Omega-N-methylarginine.

It belongs to the metallo-dependent hydrolases superfamily. Hydantoinase/dihydropyrimidinase family. In terms of assembly, homotetramer, and heterotetramer with other DPYS-like proteins. Interacts with DPYSL2, DPYSL3 and DPYSL4. Interacts with SEPTIN4 isoform 4. Interacts with MAP2 and TUBB3. Detected in brain.

It localises to the cytoplasm. Functionally, involved in the negative regulation of dendrite outgrowth. The polypeptide is Dihydropyrimidinase-related protein 5 (Dpysl5) (Mus musculus (Mouse)).